The following is a 450-amino-acid chain: Malate:quinone oxidoreductase (450 aa).

This sequence belongs to the MQO family. FAD is required as a cofactor.

It localises to the cell membrane. It catalyses the reaction (S)-malate + a quinone = a quinol + oxaloacetate. Its pathway is carbohydrate metabolism; tricarboxylic acid cycle; oxaloacetate from (S)-malate (quinone route): step 1/1. In terms of biological role, catalyzes oxidation of malate to oxaloacetate in the citric acid cycle. Donates electrons to quinones of the electron transfer chain. In Helicobacter pylori (strain J99 / ATCC 700824) (Campylobacter pylori J99), this protein is Malate:quinone oxidoreductase (mqo).